The sequence spans 416 residues: Formyl-CoA:oxalate CoA-transferase (416 aa).

Residues 17–18 (QS), R38, 72–75 (LNTK), 96–98 (NFH), H104, and 137–140 (KAYE) contribute to the CoA site. D169 acts as the Nucleophile in catalysis. 248 to 250 (GGQ) is a substrate binding site. Residue 273-275 (QEQ) participates in CoA binding.

This sequence belongs to the CoA-transferase III family. Frc subfamily. In terms of assembly, homodimer.

It catalyses the reaction formyl-CoA + oxalate = oxalyl-CoA + formate. It participates in metabolic intermediate degradation; oxalate degradation; CO(2) and formate from oxalate: step 1/2. Involved in the catabolism of oxalate and in the adapatation to low pH via the induction of the oxalate-dependent acid tolerance response (ATR). Catalyzes the transfer of the CoA moiety from formyl-CoA to oxalate. In Shigella boydii serotype 18 (strain CDC 3083-94 / BS512), this protein is Formyl-CoA:oxalate CoA-transferase.